The primary structure comprises 313 residues: 4-hydroxyproline 2-epimerase (313 aa).

The interval 1–23 (MHVIDSHTGGEPTRVILSGGPHL) is disordered. The active-site Proton acceptor is the cysteine 85. Substrate contacts are provided by residues 86 to 87 (GH), histidine 205, and aspartate 231. Residue cysteine 235 is the Proton donor of the active site. 236-237 (GT) is a substrate binding site.

It belongs to the proline racemase family.

The enzyme catalyses trans-4-hydroxy-L-proline = cis-4-hydroxy-D-proline. Its function is as follows. Catalyzes the epimerization of trans-4-hydroxy-L-proline (t4LHyp) to cis-4-hydroxy-D-proline (c4DHyp). Is likely involved in a degradation pathway that converts t4LHyp to alpha-ketoglutarate. Displays no proline racemase activity. This chain is 4-hydroxyproline 2-epimerase, found in Ruegeria pomeroyi (strain ATCC 700808 / DSM 15171 / DSS-3) (Silicibacter pomeroyi).